Reading from the N-terminus, the 858-residue chain is DNA mismatch repair protein MutS (858 aa).

600-607 contributes to the ATP binding site; the sequence is GPNMSGKS.

The protein belongs to the DNA mismatch repair MutS family.

Functionally, this protein is involved in the repair of mismatches in DNA. It is possible that it carries out the mismatch recognition step. This protein has a weak ATPase activity. The chain is DNA mismatch repair protein MutS from Bacillus pumilus (strain SAFR-032).